Here is a 165-residue protein sequence, read N- to C-terminus: Small ribosomal subunit protein uS5 (165 aa).

Residues 13–76 (LEEKVLVVNR…EAAKKNLMKI (64 aa)) enclose the S5 DRBM domain.

It belongs to the universal ribosomal protein uS5 family. Part of the 30S ribosomal subunit. Contacts proteins S4 and S8.

Functionally, with S4 and S12 plays an important role in translational accuracy. In terms of biological role, located at the back of the 30S subunit body where it stabilizes the conformation of the head with respect to the body. In Chlamydia pneumoniae (Chlamydophila pneumoniae), this protein is Small ribosomal subunit protein uS5.